The sequence spans 512 residues: Opioid growth factor receptor-like protein 1 (512 aa).

3 disordered regions span residues 1-72 (MGNI…ETGT), 323-469 (IWGP…TCCK), and 488-512 (SLSP…GPFT). Acidic residues-rich tracts occupy residues 28 to 54 (GGEE…DNEE) and 62 to 71 (TNEGGEEETG). Residues 328–337 (DKQKADENKA) are compositionally biased toward basic and acidic residues. Positions 347–361 (QKKHSHVEKKSRPAK) are enriched in basic residues. Residues 408 to 421 (TVTSENNSSKTGQT) show a composition bias toward polar residues. Residues 449–468 (RSLDTEHDLKRPEADRETCC) show a composition bias toward basic and acidic residues. Residues 490–499 (SPGTSNSNVT) are compositionally biased toward polar residues.

It belongs to the opioid growth factor receptor family.

This chain is Opioid growth factor receptor-like protein 1 (ogfrl1), found in Xenopus tropicalis (Western clawed frog).